The sequence spans 308 residues: Regulating synaptic membrane exocytosis protein 3 (308 aa).

The interval 86–120 (STETGIAVEMRSRVTRQGSRESTDGSTNSNSSDGT) is disordered. Residues 109–120 (DGSTNSNSSDGT) show a composition bias toward low complexity. One can recognise a C2 domain in the interval 156-274 (PMGDVHIAIM…DLSAAVTGWY (119 aa)). Phosphoserine occurs at positions 295 and 298.

As to quaternary structure, binds PPFIA3. Does not bind RAB3.

The protein localises to the synapse. In terms of biological role, regulates synaptic membrane exocytosis. The protein is Regulating synaptic membrane exocytosis protein 3 (RIMS3) of Homo sapiens (Human).